Here is a 397-residue protein sequence, read N- to C-terminus: MIRYFTAGESHGPALSAIVEGMPAGVALTESDINDQLARRQQGYGRGGRMKIETDRAEVLSGVRFGKTIGSPVAMLIRNRDWENWTTSMAQFEDHATEVQKITIPRPGHADLTGFVKYGFDDIRPVIDRSSARETAARVAAGSLARAFLRQLGIQIGSYISTIGPVSEAAAPASLQELLDAGAESLAAEADKSPVRMLDPEAETAAIAAIDQAKADGDTLGGIVELYITGVPMGLGSYVQHDRRLDSELAAAIMSIQAIKGVEIGPAFDNARKPGSQVHDELFAGGEKGLRRETNRAGGIEGSMSSGQPIHIRAAMKPISSLVSPLSSFDLATLEAVQSRFERSDTCAVPAAGVVAEAVVAPVIANALLEKLGGDHMAEIKERLEVYRAALRMRFEK.

The NADP(+) site is built by Arg-40 and Arg-46. Residues 129-131, 257-258, Gly-302, 317-321, and Arg-343 contribute to the FMN site; these read RSS, QA, and KPISS.

Belongs to the chorismate synthase family. As to quaternary structure, homotetramer. FMNH2 is required as a cofactor.

The enzyme catalyses 5-O-(1-carboxyvinyl)-3-phosphoshikimate = chorismate + phosphate. Its pathway is metabolic intermediate biosynthesis; chorismate biosynthesis; chorismate from D-erythrose 4-phosphate and phosphoenolpyruvate: step 7/7. In terms of biological role, catalyzes the anti-1,4-elimination of the C-3 phosphate and the C-6 proR hydrogen from 5-enolpyruvylshikimate-3-phosphate (EPSP) to yield chorismate, which is the branch point compound that serves as the starting substrate for the three terminal pathways of aromatic amino acid biosynthesis. This reaction introduces a second double bond into the aromatic ring system. The polypeptide is Chorismate synthase (Chlorobaculum tepidum (strain ATCC 49652 / DSM 12025 / NBRC 103806 / TLS) (Chlorobium tepidum)).